The sequence spans 122 residues: Large ribosomal subunit protein uL14 (122 aa).

This sequence belongs to the universal ribosomal protein uL14 family. In terms of assembly, part of the 50S ribosomal subunit. Forms a cluster with proteins L3 and L19. In the 70S ribosome, L14 and L19 interact and together make contacts with the 16S rRNA in bridges B5 and B8.

In terms of biological role, binds to 23S rRNA. Forms part of two intersubunit bridges in the 70S ribosome. This Rhizobium etli (strain CIAT 652) protein is Large ribosomal subunit protein uL14.